We begin with the raw amino-acid sequence, 253 residues long: Fatty acid elongase 5 (253 aa).

7 helical membrane passes run 24-44, 60-80, 100-120, 127-147, 150-170, 188-208, and 214-234; these read IFVS…LVII, IMMI…ISLA, FWIF…VLMI, QLSF…GLLL, GIGN…HFLM, ILTK…SLAP, and FALQ…ILFL. The HxxHH motif motif lies at 132 to 136; it reads HIYHH. Histidine 135 functions as the Nucleophile in the catalytic mechanism.

The protein belongs to the ELO family.

Its subcellular location is the membrane. It carries out the reaction an acyl-CoA + malonyl-CoA + H(+) = a 3-oxoacyl-CoA + CO2 + CoA. It functions in the pathway lipid metabolism; polyunsaturated fatty acid biosynthesis. In terms of biological role, involved in the synthesis of fatty acids. Elongates C20 polyunsaturated fatty acids (PUFAs) with a preference for n-6 PUFAs. The protein is Fatty acid elongase 5 of Trypanosoma cruzi (strain CL Brener).